A 143-amino-acid polypeptide reads, in one-letter code: Lysozyme C (143 aa).

An N-terminal signal peptide occupies residues 1 to 15; sequence MKIPVFLLLLALANA. The region spanning 16-143 is the C-type lysozyme domain; that stretch reads KVFQRCEWAR…LSAYIAGCGL (128 aa). Intrachain disulfides connect cysteine 21–cysteine 141, cysteine 45–cysteine 129, cysteine 79–cysteine 94, and cysteine 90–cysteine 108. Residues glutamate 50 and aspartate 67 contribute to the active site.

The protein belongs to the glycosyl hydrolase 22 family. Monomer.

It is found in the secreted. The catalysed reaction is Hydrolysis of (1-&gt;4)-beta-linkages between N-acetylmuramic acid and N-acetyl-D-glucosamine residues in a peptidoglycan and between N-acetyl-D-glucosamine residues in chitodextrins.. Lysozymes have primarily a bacteriolytic function; those in tissues and body fluids are associated with the monocyte-macrophage system and enhance the activity of immunoagents. This is Lysozyme C from Takifugu rubripes (Japanese pufferfish).